The primary structure comprises 242 residues: Small ribosomal subunit protein uS2 (242 aa).

This sequence belongs to the universal ribosomal protein uS2 family.

This chain is Small ribosomal subunit protein uS2, found in Shewanella baltica (strain OS223).